The primary structure comprises 249 residues: Probable amino-acid import ATP-binding protein YxeO (249 aa).

In terms of domain architecture, ABC transporter spans 2–239 (ITVKNIRKAF…PKNERTKRFI (238 aa)). 34–41 (GPSGSGKS) is an ATP binding site.

It belongs to the ABC transporter superfamily. The complex is composed of two ATP-binding proteins (YxeO), two transmembrane proteins (YxeN) and a solute-binding protein (YxeM).

Its subcellular location is the cell membrane. Its function is as follows. Probably part of the ABC transporter complex YxeMNO that could be involved in amino-acid import. May transport S-methylcysteine. Responsible for energy coupling to the transport system. This Bacillus subtilis (strain 168) protein is Probable amino-acid import ATP-binding protein YxeO (yxeO).